Reading from the N-terminus, the 576-residue chain is Polyphenol oxidase 3 (576 aa).

Cu cation is bound by residues histidine 61, histidine 85, histidine 94, histidine 259, histidine 263, and histidine 296. The 2'-(S-cysteinyl)-histidine (Cys-His) cross-link spans 83–85 (CTH). Substrate is bound at residue histidine 263. Residues 393–576 (FVTTQTENPA…ILDDIIHRVN (184 aa)) constitute a propeptide, removed in mature form.

This sequence belongs to the tyrosinase family. Tetramer composed of two subunits of PPO3 (H subunits) and two subunits of the as yet uncharacterized product of ORF239342 (L subunits). Requires Cu(2+) as cofactor. In terms of processing, the C-ter is probably cleaved after Gly-392 since the mature active protein is smaller than the protein encoded by the gene.

It carries out the reaction 2 L-dopa + O2 = 2 L-dopaquinone + 2 H2O. The enzyme catalyses L-tyrosine + O2 = L-dopaquinone + H2O. In terms of biological role, copper-containing oxidase that catalyzes both the o-hydroxylation of monophenols and the subsequent oxidation of the resulting o-diphenols into reactive o-quinones, which evolve spontaneously to produce intermediates, which associate in dark brown pigments. Involved in the initial step of melanin synthesis. Melanins constitute a mechanism of defense and resistance to stress such as UV radiations, free radicals, gamma rays, dehydratation and extreme temperatures, and contribute to the fungal cell-wall resistance against hydrolytic enzymes in avoiding cellular lysis. Fungal pigments are also involved in the formation and stability of spores. This is Polyphenol oxidase 3 (PPO3) from Agaricus bisporus (White button mushroom).